The primary structure comprises 504 residues: Anaerobic nitric oxide reductase transcription regulator NorR (504 aa).

Position 57 is a 4-aspartylphosphate (Asp-57). One can recognise a Sigma-54 factor interaction domain in the interval 187–416; sequence MIGLSPGMMQ…LEHAIHRAVV (230 aa). ATP contacts are provided by residues 215 to 222 and 278 to 287; these read GETGTGKE and ADNGTLFLDE. Residues 479-498 constitute a DNA-binding region (H-T-H motif); the sequence is WAACARALEMDVANLHRLAK.

It participates in nitrogen metabolism; nitric oxide reduction. Functionally, required for the expression of anaerobic nitric oxide (NO) reductase, acts as a transcriptional activator for at least the norVW operon. Activation also requires sigma-54. The chain is Anaerobic nitric oxide reductase transcription regulator NorR from Enterobacter sp. (strain 638).